A 315-amino-acid chain; its full sequence is Rab effector Noc2 (315 aa).

One can recognise a RabBD domain in the interval Q41–G158. The FYVE-type zinc-finger motif lies at G89–E146. 8 residues coordinate Zn(2+): C95, C98, C112, C115, C120, C123, C138, and C141. A disordered region spans residues G170 to G315. 2 stretches are compositionally biased toward basic and acidic residues: residues P184–E193 and L221–K240. Over residues G262–G275 the composition is skewed to polar residues. A compositionally biased stretch (low complexity) spans G298 to G315.

Recruited to dense-core vesicles through specific interaction with RAB27A in endocrine cells. Interacts with RAB3A, RAB3B, RAB3C and RAB3D. Interacts with ZYX. As to expression, moderate to high levels of expression in thyroid, ovary, stomach, heart, pancreas, skeletal muscle, kidney and liver. Also detected in epithelial cells.

It localises to the cytoplasm. It is found in the cytoplasmic vesicle. The protein localises to the secretory vesicle membrane. Its function is as follows. Rab GTPase effector involved in the late steps of regulated exocytosis, both in endocrine and exocrine cells. Acts as a potential RAB3B effector protein in epithelial cells. The sequence is that of Rab effector Noc2 (RPH3AL) from Homo sapiens (Human).